The following is a 424-amino-acid chain: Glutamate-1-semialdehyde 2,1-aminomutase (424 aa).

An N6-(pyridoxal phosphate)lysine modification is found at lysine 258.

The protein belongs to the class-III pyridoxal-phosphate-dependent aminotransferase family. HemL subfamily. The cofactor is pyridoxal 5'-phosphate.

It is found in the cytoplasm. It catalyses the reaction (S)-4-amino-5-oxopentanoate = 5-aminolevulinate. It participates in porphyrin-containing compound metabolism; protoporphyrin-IX biosynthesis; 5-aminolevulinate from L-glutamyl-tRNA(Glu): step 2/2. This Pyrobaculum neutrophilum (strain DSM 2338 / JCM 9278 / NBRC 100436 / V24Sta) (Thermoproteus neutrophilus) protein is Glutamate-1-semialdehyde 2,1-aminomutase.